A 139-amino-acid polypeptide reads, in one-letter code: GSK3B-interacting protein (139 aa).

Positions 41-45 are required for PRKAR2A interaction; contributes to a protective effect against H(2)O(2)-induced apoptosis; that stretch reads VNDVL. Positions 115-139 are interaction with GSK3B and acts as a GSK3B inhibitor; that stretch reads SPAYREAFGNALLQRLEALKRDGQS.

The protein belongs to the GSKIP family. Forms a complex composed of PRKAR2A or PRKAR2B, GSK3B and GSKIP through GSKIP interaction; facilitates PKA-induced phosphorylation of GSK3B leading to GSK3B inactivation; recruits DNM1L through GSK3B for PKA-mediated phosphorylation of DNM1L; promotes beta-catenin degradation through GSK3B-induced phosphorylation of beta-catenin; stabilizes beta-catenin and enhances Wnt-induced signaling through PKA-induced phosphorylation of beta-catenin. Interacts with GSK3B; induces GSK3B-mediated phosphorylation of GSKIP and inhibits GSK3B kinase activity. Phosphorylated by GSK3B.

The protein resides in the cytoplasm. The protein localises to the nucleus. Functionally, A-kinase anchoring protein for GSK3B and PKA that regulates or facilitates their kinase activity towards their targets. The ternary complex enhances Wnt-induced signaling by facilitating the GSK3B- and PKA-induced phosphorylation of beta-catenin leading to beta-catenin degradation and stabilization respectively. Upon cAMP activation, the ternary complex contributes to neuroprotection against oxidative stress-induced apoptosis by facilitating the PKA-induced phosphorylation of DML1 and PKA-induced inactivation of GSK3B. During neurite outgrowth promotes neuron proliferation; while increases beta-catenin-induced transcriptional activity through GSK3B kinase activity inhibition, reduces N-cadherin level to promote cell cycle progression. May play a role in cleft palate formation and is required for postnatal life through modulation of the activity of GSK3B during development. This is GSK3B-interacting protein from Mus musculus (Mouse).